The primary structure comprises 242 residues: Dickkopf-like protein 1 (242 aa).

Residues 1–30 (MGEASPPAPARRHLLVLLLLLSTLVIPSAA) form the signal peptide. Asparagine 97 and asparagine 112 each carry an N-linked (GlcNAc...) asparagine glycan.

As to quaternary structure, interacts with SLXL1; Co-localize in seminiferous tubules. Interacts with SLY. Post-translationally, N-glycosylated during spermatogenesis. Not N-glycosylated in mature sperm. More highly expressed in adult testis than in fetal testis. Exclusively expressed in the testis (at protein level). Intense expression in stages II, III and IV of spermatogenesis, whereas expression is lower in stage I.

It localises to the secreted. It is found in the cytoplasmic vesicle. The protein resides in the secretory vesicle. Its subcellular location is the acrosome. Involved in fertilization by facilitating sperm penetration of the zona pellucida. May promote spermatocyte apoptosis, thereby limiting sperm production. In adults, may reduce testosterone synthesis in Leydig cells. Is not essential either for development or fertility. In Homo sapiens (Human), this protein is Dickkopf-like protein 1.